A 267-amino-acid polypeptide reads, in one-letter code: tRNA pseudouridine synthase A (267 aa).

Residue aspartate 53 is the Nucleophile of the active site. Tyrosine 114 contacts substrate.

This sequence belongs to the tRNA pseudouridine synthase TruA family. In terms of assembly, homodimer.

It catalyses the reaction uridine(38/39/40) in tRNA = pseudouridine(38/39/40) in tRNA. Functionally, formation of pseudouridine at positions 38, 39 and 40 in the anticodon stem and loop of transfer RNAs. In Chlamydia trachomatis serovar A (strain ATCC VR-571B / DSM 19440 / HAR-13), this protein is tRNA pseudouridine synthase A.